Consider the following 363-residue polypeptide: Phosphoserine aminotransferase (363 aa).

Arg42 contributes to the L-glutamate binding site. Pyridoxal 5'-phosphate contacts are provided by residues 76-77 (GR), Trp102, Thr156, Asp175, and Gln198. Lys199 bears the N6-(pyridoxal phosphate)lysine mark. 240 to 241 (NT) is a binding site for pyridoxal 5'-phosphate.

Belongs to the class-V pyridoxal-phosphate-dependent aminotransferase family. SerC subfamily. Homodimer. The cofactor is pyridoxal 5'-phosphate.

It is found in the cytoplasm. The catalysed reaction is O-phospho-L-serine + 2-oxoglutarate = 3-phosphooxypyruvate + L-glutamate. It carries out the reaction 4-(phosphooxy)-L-threonine + 2-oxoglutarate = (R)-3-hydroxy-2-oxo-4-phosphooxybutanoate + L-glutamate. It participates in amino-acid biosynthesis; L-serine biosynthesis; L-serine from 3-phospho-D-glycerate: step 2/3. Its pathway is cofactor biosynthesis; pyridoxine 5'-phosphate biosynthesis; pyridoxine 5'-phosphate from D-erythrose 4-phosphate: step 3/5. Functionally, catalyzes the reversible conversion of 3-phosphohydroxypyruvate to phosphoserine and of 3-hydroxy-2-oxo-4-phosphonooxybutanoate to phosphohydroxythreonine. This Shewanella halifaxensis (strain HAW-EB4) protein is Phosphoserine aminotransferase.